Reading from the N-terminus, the 137-residue chain is Prostate and testis expressed protein 13 (137 aa).

The first 20 residues, 1–20 (MFQKLLLSVFIILLMDVGER), serve as a signal peptide directing secretion. A UPAR/Ly6 domain is found at 28 to 114 (RHCNLCSHYD…CIDRNYCNDG (87 aa)). 5 disulfide bridges follow: cysteine 30-cysteine 60, cysteine 33-cysteine 41, cysteine 48-cysteine 84, cysteine 87-cysteine 104, and cysteine 105-cysteine 111. A glycan (N-linked (GlcNAc...) asparagine) is linked at asparagine 57.

Belongs to the PATE family. Strongly expressed in the epididymis, including the initial segment, caput, corpus and cauda regions. Weakly expressed in prostate.

Its subcellular location is the secreted. The protein is Prostate and testis expressed protein 13 of Mus musculus (Mouse).